Reading from the N-terminus, the 956-residue chain is MAM domain-containing glycosylphosphatidylinositol anchor protein 2 (956 aa).

An N-terminal signal peptide occupies residues 1–25 (MDLLYGLVWLLTVLLEGISGQGVYA). Ig-like domains are found at residues 27 to 127 (PTVR…IRVD) and 134 to 232 (PVVT…KMVS). Cystine bridges form between cysteine 62–cysteine 110 and cysteine 159–cysteine 216. Asparagine 92, asparagine 213, and asparagine 237 each carry an N-linked (GlcNAc...) asparagine glycan. Ig-like domains follow at residues 242 to 328 (PSIK…NIIV), 340 to 436 (PDPY…VNIS), 442 to 533 (PNLT…ALVQ), and 540 to 627 (PAVE…FLVT). 2 disulfides stabilise this stretch: cysteine 264–cysteine 310 and cysteine 359–cysteine 417. Asparagine 434, asparagine 443, asparagine 504, asparagine 610, and asparagine 703 each carry an N-linked (GlcNAc...) asparagine glycan. 2 disulfides stabilise this stretch: cysteine 465–cysteine 515 and cysteine 561–cysteine 611. Residues 638–739 (DTYNPVWQNR…IRVIKYSAPV (102 aa)) form the Fibronectin type-III domain. The 176-residue stretch at 746–921 (FHCGFEDGNI…VSIAEGECAK (176 aa)) folds into the MAM domain. Aspartate 931 carries GPI-anchor amidated aspartate lipidation. A propeptide spans 932–956 (GAVGILVHIWLFPIIVLISILSPRR) (removed in mature form).

In terms of assembly, interacts (through the Ig-like domains) with NLGN2. As to expression, detected in Leydig cells, syncytiotrophoblast, duodenal villi epithelial cells and neutrophils from kidney and cutaneous squamous cell carcinoma (at protein level).

Its subcellular location is the cell membrane. In terms of biological role, may be involved in cell-cell interactions. This is MAM domain-containing glycosylphosphatidylinositol anchor protein 2 (MDGA2) from Homo sapiens (Human).